The primary structure comprises 132 residues: Small ribosomal subunit protein uS8 (132 aa).

Belongs to the universal ribosomal protein uS8 family. Part of the 30S ribosomal subunit. Contacts proteins S5 and S12.

Its function is as follows. One of the primary rRNA binding proteins, it binds directly to 16S rRNA central domain where it helps coordinate assembly of the platform of the 30S subunit. The protein is Small ribosomal subunit protein uS8 of Rhodospirillum rubrum (strain ATCC 11170 / ATH 1.1.1 / DSM 467 / LMG 4362 / NCIMB 8255 / S1).